The chain runs to 319 residues: R-phycoerythrin gamma chain, chloroplastic (319 aa).

Residues 1–71 (MDSPAFAVTG…RPKKLASYKR (71 aa)) constitute a chloroplast transit peptide. Cys96 and Cys135 together coordinate phycourobilin. A (2R,3E)-phycoerythrobilin-binding site is contributed by Cys212. Cys299 lines the phycourobilin pocket.

As to quaternary structure, heteromer of 4 alpha, 4 beta and one gamma chains. In terms of processing, contains four covalently linked bilin chromophores.

It is found in the plastid. The protein resides in the chloroplast thylakoid membrane. The sequence is that of R-phycoerythrin gamma chain, chloroplastic from Corallina officinalis (Coral seaweed).